Consider the following 178-residue polypeptide: CDP-archaeol synthase (178 aa).

Transmembrane regions (helical) follow at residues 3 to 23, 56 to 76, 91 to 111, 131 to 151, and 152 to 172; these read LLLL…ANAV, FFGI…VILY, IILS…GSFI, FIIF…NIIV, and LLLV…YKLH.

The protein belongs to the CDP-archaeol synthase family. The cofactor is Mg(2+).

The protein localises to the cell membrane. The catalysed reaction is 2,3-bis-O-(geranylgeranyl)-sn-glycerol 1-phosphate + CTP + H(+) = CDP-2,3-bis-O-(geranylgeranyl)-sn-glycerol + diphosphate. Its pathway is membrane lipid metabolism; glycerophospholipid metabolism. In terms of biological role, catalyzes the formation of CDP-2,3-bis-(O-geranylgeranyl)-sn-glycerol (CDP-archaeol) from 2,3-bis-(O-geranylgeranyl)-sn-glycerol 1-phosphate (DGGGP) and CTP. This reaction is the third ether-bond-formation step in the biosynthesis of archaeal membrane lipids. The sequence is that of CDP-archaeol synthase from Methanococcus maripaludis (strain DSM 14266 / JCM 13030 / NBRC 101832 / S2 / LL).